The sequence spans 218 residues: Small ribosomal subunit protein mS34 (218 aa).

This sequence belongs to the mitochondrion-specific ribosomal protein mS34 family. Component of the mitochondrial ribosome small subunit (28S) which comprises a 12S rRNA and about 30 distinct proteins. As to expression, widely expressed (at protein liver).

Its subcellular location is the mitochondrion. In terms of biological role, required for mitochondrial translation, plays a role in maintaining the stability of the small ribosomal subunit and the 12S rRNA that are required for mitoribosome formation. The polypeptide is Small ribosomal subunit protein mS34 (Mrps34) (Mus musculus (Mouse)).